Consider the following 278-residue polypeptide: Elongation factor Ts (278 aa).

Positions 82 to 85 (TDFV) are involved in Mg(2+) ion dislocation from EF-Tu.

It belongs to the EF-Ts family.

It is found in the cytoplasm. In terms of biological role, associates with the EF-Tu.GDP complex and induces the exchange of GDP to GTP. It remains bound to the aminoacyl-tRNA.EF-Tu.GTP complex up to the GTP hydrolysis stage on the ribosome. This chain is Elongation factor Ts (tsf), found in Streptomyces ramocissimus.